Here is a 317-residue protein sequence, read N- to C-terminus: Transaldolase (317 aa).

The active-site Schiff-base intermediate with substrate is the Lys-126.

The protein belongs to the transaldolase family. Type 1 subfamily. In terms of assembly, homodimer.

The protein resides in the cytoplasm. The catalysed reaction is D-sedoheptulose 7-phosphate + D-glyceraldehyde 3-phosphate = D-erythrose 4-phosphate + beta-D-fructose 6-phosphate. It functions in the pathway carbohydrate degradation; pentose phosphate pathway; D-glyceraldehyde 3-phosphate and beta-D-fructose 6-phosphate from D-ribose 5-phosphate and D-xylulose 5-phosphate (non-oxidative stage): step 2/3. Transaldolase is important for the balance of metabolites in the pentose-phosphate pathway. The polypeptide is Transaldolase (Burkholderia multivorans (strain ATCC 17616 / 249)).